The sequence spans 150 residues: Large ribosomal subunit protein uL15 (150 aa).

The tract at residues 1-58 (MNLSGIKPPKGQVKTKKRIGRGMGSGHGKTATRGSKGQHAGTGFSQKRGFEGGQMPLH) is disordered.

Belongs to the universal ribosomal protein uL15 family. As to quaternary structure, part of the 50S ribosomal subunit.

Its function is as follows. Binds to the 23S rRNA. The protein is Large ribosomal subunit protein uL15 of Solibacter usitatus (strain Ellin6076).